Reading from the N-terminus, the 255-residue chain is Triosephosphate isomerase (255 aa).

9–11 lines the substrate pocket; that stretch reads NWK. The active-site Electrophile is the His-95. Glu-167 serves as the catalytic Proton acceptor. Substrate is bound by residues Gly-173, Ser-212, and 233–234; that span reads GG.

The protein belongs to the triosephosphate isomerase family. As to quaternary structure, homodimer.

The protein localises to the cytoplasm. The catalysed reaction is D-glyceraldehyde 3-phosphate = dihydroxyacetone phosphate. The protein operates within carbohydrate biosynthesis; gluconeogenesis. It functions in the pathway carbohydrate degradation; glycolysis; D-glyceraldehyde 3-phosphate from glycerone phosphate: step 1/1. Involved in the gluconeogenesis. Catalyzes stereospecifically the conversion of dihydroxyacetone phosphate (DHAP) to D-glyceraldehyde-3-phosphate (G3P). The protein is Triosephosphate isomerase of Erwinia tasmaniensis (strain DSM 17950 / CFBP 7177 / CIP 109463 / NCPPB 4357 / Et1/99).